The primary structure comprises 477 residues: Glutamate--tRNA ligase (477 aa).

The 'HIGH' region motif lies at 8-18 (PSPTGTLHIGT). The 'KMSKS' region motif lies at 247–251 (KLSKR). ATP is bound at residue lysine 250.

This sequence belongs to the class-I aminoacyl-tRNA synthetase family. Glutamate--tRNA ligase type 1 subfamily. Monomer.

It localises to the cytoplasm. The catalysed reaction is tRNA(Glu) + L-glutamate + ATP = L-glutamyl-tRNA(Glu) + AMP + diphosphate. Its function is as follows. Catalyzes the attachment of glutamate to tRNA(Glu) in a two-step reaction: glutamate is first activated by ATP to form Glu-AMP and then transferred to the acceptor end of tRNA(Glu). This is Glutamate--tRNA ligase from Synechococcus sp. (strain CC9902).